The following is a 58-amino-acid chain: Metallothionein (58 aa).

Residues 1 to 29 (MPDPCCIDKCECKEGGCKAGCKCTSCRCT) form a beta region. C5, C6, C10, C12, C17, C21, C23, C26, C28, C31, C34, C38, C40, C46, C50, C54, C56, and C57 together coordinate a divalent metal cation. Residues 30 to 58 (PCEKCSSGCKCTTKEDCCKTCTKPCSCCP) are alpha.

This sequence belongs to the metallothionein superfamily. Type 3 family.

Metallothioneins have a high content of cysteine residues that bind various heavy metals. Class I MTS in marine crustacea are involved in the sequestration of elevated levels of heavy-metal ions. This Carcinus maenas (Common shore crab) protein is Metallothionein.